Reading from the N-terminus, the 436-residue chain is Methylenetetrahydrofolate--tRNA-(uracil-5-)-methyltransferase TrmFO (436 aa).

9–14 (GAGLAG) serves as a coordination point for FAD.

It belongs to the MnmG family. TrmFO subfamily. The cofactor is FAD.

The protein resides in the cytoplasm. The enzyme catalyses uridine(54) in tRNA + (6R)-5,10-methylene-5,6,7,8-tetrahydrofolate + NADH + H(+) = 5-methyluridine(54) in tRNA + (6S)-5,6,7,8-tetrahydrofolate + NAD(+). It catalyses the reaction uridine(54) in tRNA + (6R)-5,10-methylene-5,6,7,8-tetrahydrofolate + NADPH + H(+) = 5-methyluridine(54) in tRNA + (6S)-5,6,7,8-tetrahydrofolate + NADP(+). Catalyzes the folate-dependent formation of 5-methyl-uridine at position 54 (M-5-U54) in all tRNAs. This chain is Methylenetetrahydrofolate--tRNA-(uracil-5-)-methyltransferase TrmFO, found in Acetivibrio thermocellus (strain ATCC 27405 / DSM 1237 / JCM 9322 / NBRC 103400 / NCIMB 10682 / NRRL B-4536 / VPI 7372) (Clostridium thermocellum).